Reading from the N-terminus, the 93-residue chain is RNA-binding protein Hfq (93 aa).

In terms of domain architecture, Sm spans 9–68 (DPFLNALRKERIPVSIFLVNGIKLQGQIESFDQYVVLLKNAVSQMVYKHAISTVVPARNP). Over residues 74-86 (PAMAAGATAAPAA) the composition is skewed to low complexity. A disordered region spans residues 74 to 93 (PAMAAGATAAPAADEGYGNQ).

The protein belongs to the Hfq family. In terms of assembly, homohexamer.

RNA chaperone that binds small regulatory RNA (sRNAs) and mRNAs to facilitate mRNA translational regulation in response to envelope stress, environmental stress and changes in metabolite concentrations. Also binds with high specificity to tRNAs. The protein is RNA-binding protein Hfq of Alcanivorax borkumensis (strain ATCC 700651 / DSM 11573 / NCIMB 13689 / SK2).